A 181-amino-acid polypeptide reads, in one-letter code: Transcription termination/antitermination protein NusG (181 aa).

Positions 130–161 (PGEMVRVNDGPFADFNGVVEEVDYEKSRLKVS) constitute a KOW domain.

The protein belongs to the NusG family. In terms of assembly, monomer. Interacts with the transcription termination factor Rho and with RNA polymerase.

Functionally, participates in transcription elongation, termination and antitermination. In the absence of Rho, increases the rate of transcription elongation by the RNA polymerase (RNAP), probably by partially suppressing pausing. In the presence of Rho, modulates most Rho-dependent termination events by interacting with the RNAP to render the complex more susceptible to the termination activity of Rho. May be required to overcome a kinetic limitation of Rho to function at certain terminators. Also involved in ribosomal RNA transcriptional antitermination. This chain is Transcription termination/antitermination protein NusG, found in Shigella flexneri.